We begin with the raw amino-acid sequence, 276 residues long: Undecaprenyl-diphosphatase (276 aa).

7 consecutive transmembrane segments (helical) span residues 12-34 (LGIV…IVVG), 43-63 (TATA…MWEF), 85-105 (FNLL…ADLI), 108-128 (WLFN…IMLW), 185-205 (TEFS…YSLF), 218-238 (IFAI…RALL), and 249-269 (FAWY…LHLI).

Belongs to the UppP family.

It localises to the cell inner membrane. It carries out the reaction di-trans,octa-cis-undecaprenyl diphosphate + H2O = di-trans,octa-cis-undecaprenyl phosphate + phosphate + H(+). Catalyzes the dephosphorylation of undecaprenyl diphosphate (UPP). Confers resistance to bacitracin. The sequence is that of Undecaprenyl-diphosphatase from Ectopseudomonas mendocina (strain ymp) (Pseudomonas mendocina).